We begin with the raw amino-acid sequence, 181 residues long: Probable pyruvoyl-dependent arginine decarboxylase (181 aa).

Ser43 is subject to Pyruvic acid (Ser).

Belongs to the PdaD family. Pyruvate serves as cofactor.

The enzyme catalyses L-arginine + H(+) = agmatine + CO2. This Chlorobium luteolum (strain DSM 273 / BCRC 81028 / 2530) (Pelodictyon luteolum) protein is Probable pyruvoyl-dependent arginine decarboxylase.